The sequence spans 369 residues: Probable serine/threonine-protein kinase DDB_G0291350 (369 aa).

The Protein kinase domain maps to 22–367; it reads YTVNRILGEG…QVIERINQII (346 aa). Residues 28-36 and Lys51 contribute to the ATP site; that span reads LGEGGFSFV. Residue Asp159 is the Proton acceptor of the active site. The interval 169 to 225 is disordered; that stretch reads NLRRPSNNNNNNNNNNNNNNNNNNNNNNNNNNNNNNNNNNNNNNNNNNNNNNNSEDS. Over residues 175–221 the composition is skewed to low complexity; it reads NNNNNNNNNNNNNNNNNNNNNNNNNNNNNNNNNNNNNNNNNNNNNNN.

The protein belongs to the protein kinase superfamily. Ser/Thr protein kinase family.

The catalysed reaction is L-seryl-[protein] + ATP = O-phospho-L-seryl-[protein] + ADP + H(+). It carries out the reaction L-threonyl-[protein] + ATP = O-phospho-L-threonyl-[protein] + ADP + H(+). The chain is Probable serine/threonine-protein kinase DDB_G0291350 from Dictyostelium discoideum (Social amoeba).